The chain runs to 198 residues: MIAHLRGTLLSKQPGQAIVECAGVGYDVAISVPTFTALPAEGAEVRLHIHTQVSEDAIALFGFLDREEKRLFERLITVSGVGPKLAIKMLSGLSPERTVAALRAQDHASLTRIPGVGKKLAERLVVELKDKLDDLIAAAPAAGPVAAGPAAEDVLSALLNLGYQRPAALKAIETAVEKDAAAGEDFDLLFRAALKLIR.

The tract at residues 1 to 64 is domain I; it reads MIAHLRGTLL…EDAIALFGFL (64 aa). A domain II region spans residues 65 to 141; it reads DREEKRLFER…LDDLIAAAPA (77 aa). The interval 141–145 is flexible linker; the sequence is AAGPV. The segment at 146-198 is domain III; that stretch reads AAGPAAEDVLSALLNLGYQRPAALKAIETAVEKDAAAGEDFDLLFRAALKLIR.

Belongs to the RuvA family. In terms of assembly, homotetramer. Forms an RuvA(8)-RuvB(12)-Holliday junction (HJ) complex. HJ DNA is sandwiched between 2 RuvA tetramers; dsDNA enters through RuvA and exits via RuvB. An RuvB hexamer assembles on each DNA strand where it exits the tetramer. Each RuvB hexamer is contacted by two RuvA subunits (via domain III) on 2 adjacent RuvB subunits; this complex drives branch migration. In the full resolvosome a probable DNA-RuvA(4)-RuvB(12)-RuvC(2) complex forms which resolves the HJ.

It localises to the cytoplasm. In terms of biological role, the RuvA-RuvB-RuvC complex processes Holliday junction (HJ) DNA during genetic recombination and DNA repair, while the RuvA-RuvB complex plays an important role in the rescue of blocked DNA replication forks via replication fork reversal (RFR). RuvA specifically binds to HJ cruciform DNA, conferring on it an open structure. The RuvB hexamer acts as an ATP-dependent pump, pulling dsDNA into and through the RuvAB complex. HJ branch migration allows RuvC to scan DNA until it finds its consensus sequence, where it cleaves and resolves the cruciform DNA. This chain is Holliday junction branch migration complex subunit RuvA, found in Acidobacterium capsulatum (strain ATCC 51196 / DSM 11244 / BCRC 80197 / JCM 7670 / NBRC 15755 / NCIMB 13165 / 161).